We begin with the raw amino-acid sequence, 548 residues long: Membrane protein insertase YidC (548 aa).

Residues 6–26 traverse the membrane as a helical segment; that stretch reads NLLIIALLFVSFMIWQAWEQD. A disordered region spans residues 28 to 52; it reads NPQPQQQTTQTTTTAAGSAADQGVP. The segment covering 29–41 has biased composition (low complexity); the sequence is PQPQQQTTQTTTT. The next 4 membrane-spanning stretches (helical) occupy residues 345–365, 420–440, 458–478, and 499–519; these read KFIH…TFIV, LGGC…YYML, LSAQ…MFFI, and PVIF…YYIV.

The protein belongs to the OXA1/ALB3/YidC family. Type 1 subfamily. Interacts with the Sec translocase complex via SecD. Specifically interacts with transmembrane segments of nascent integral membrane proteins during membrane integration.

The protein resides in the cell inner membrane. Its function is as follows. Required for the insertion and/or proper folding and/or complex formation of integral membrane proteins into the membrane. Involved in integration of membrane proteins that insert both dependently and independently of the Sec translocase complex, as well as at least some lipoproteins. Aids folding of multispanning membrane proteins. The polypeptide is Membrane protein insertase YidC (Klebsiella pneumoniae (strain 342)).